A 519-amino-acid chain; its full sequence is Glycogen synthase (519 aa).

The interval 1–40 (MISAAVEPHVDAFKPDNREPLTPDFATTGKAPGAQRQHNP) is disordered. Residues 8-21 (PHVDAFKPDNREPL) show a composition bias toward basic and acidic residues. Lysine 57 contacts ADP-alpha-D-glucose.

It belongs to the glycosyltransferase 1 family. Bacterial/plant glycogen synthase subfamily.

It carries out the reaction [(1-&gt;4)-alpha-D-glucosyl](n) + ADP-alpha-D-glucose = [(1-&gt;4)-alpha-D-glucosyl](n+1) + ADP + H(+). It functions in the pathway glycan biosynthesis; glycogen biosynthesis. Its function is as follows. Synthesizes alpha-1,4-glucan chains using ADP-glucose. This is Glycogen synthase from Pseudomonas putida (strain ATCC 47054 / DSM 6125 / CFBP 8728 / NCIMB 11950 / KT2440).